Reading from the N-terminus, the 257-residue chain is Ubiquinone biosynthesis O-methyltransferase (257 aa).

S-adenosyl-L-methionine-binding residues include Arg43, Gly77, Asp98, and Met144.

The protein belongs to the methyltransferase superfamily. UbiG/COQ3 family.

It carries out the reaction a 3-demethylubiquinol + S-adenosyl-L-methionine = a ubiquinol + S-adenosyl-L-homocysteine + H(+). The enzyme catalyses a 3-(all-trans-polyprenyl)benzene-1,2-diol + S-adenosyl-L-methionine = a 2-methoxy-6-(all-trans-polyprenyl)phenol + S-adenosyl-L-homocysteine + H(+). It participates in cofactor biosynthesis; ubiquinone biosynthesis. O-methyltransferase that catalyzes the 2 O-methylation steps in the ubiquinone biosynthetic pathway. The polypeptide is Ubiquinone biosynthesis O-methyltransferase (Psychrobacter arcticus (strain DSM 17307 / VKM B-2377 / 273-4)).